Here is a 721-residue protein sequence, read N- to C-terminus: BBSome complex member BBS2 (721 aa).

The stretch at 325–369 (KGNLLDTSVEQDLIRELSQKKQNLLLELRNYEESTKAELSSPLNE) forms a coiled coil.

As to quaternary structure, part of BBSome complex, that contains BBS1, BBS2, BBS4, BBS5, BBS7, BBS8/TTC8, BBS9 and BBIP10. Interacts (via C-terminus) with BBS7. Interacts (via coiled coil domain) with MKKS. Interacts with CCDC28B. Interacts with DLEC1.

It localises to the cell projection. The protein localises to the cilium membrane. The protein resides in the cytoplasm. It is found in the cytoskeleton. Its subcellular location is the microtubule organizing center. It localises to the centrosome. The protein localises to the centriolar satellite. In terms of biological role, the BBSome complex is thought to function as a coat complex required for sorting of specific membrane proteins to the primary cilia. The BBSome complex is required for ciliogenesis but is dispensable for centriolar satellite function. This ciliogenic function is mediated in part by the Rab8 GDP/GTP exchange factor, which localizes to the basal body and contacts the BBSome. Rab8(GTP) enters the primary cilium and promotes extension of the ciliary membrane. Firstly the BBSome associates with the ciliary membrane and binds to RAB3IP/Rabin8, the guanosyl exchange factor (GEF) for Rab8 and then the Rab8-GTP localizes to the cilium and promotes docking and fusion of carrier vesicles to the base of the ciliary membrane. The BBSome complex, together with the LTZL1, controls SMO ciliary trafficking and contributes to the sonic hedgehog (SHH) pathway regulation. Required for proper BBSome complex assembly and its ciliary localization. In Mus musculus (Mouse), this protein is BBSome complex member BBS2 (Bbs2).